The following is a 614-amino-acid chain: Lamin-2 (614 aa).

Residues 1 to 10 are compositionally biased toward basic residues; that stretch reads MSAQVSKKRG. Residues 1-51 are disordered; sequence MSAQVSKKRGGSNPPKTGQHAASSTTSRTESSATSQTIYERQEVETRTQRT. A head region spans residues 1 to 76; the sequence is MSAQVSKKRG…GTAGLAGSPL (76 aa). The segment covering 21 to 37 has biased composition (low complexity); sequence AASSTTSRTESSATSQT. The interval 77–117 is coil 1A; sequence SRHQEKEEFKLLNNRFANYIDTIRAQQEEISVLRRKVETVS. An IF rod domain is found at 81-433; it reads EKEEFKLLNN…ALLRTEEERL (353 aa). The segment at 118 to 128 is linker 1; the sequence is SKEVVENQKIK. The segment at 129-268 is coil 1B; sequence ERYNLEIANL…EEIVSLRNQR (140 aa). Residues 269–286 form a linker 2 region; it reads RTEITEVETRMGEEYQSK. Positions 287–426 are coil 2; it reads IVEQLNDLRA…AELATYNALL (140 aa). The tail stretch occupies residues 427-611; it reads RTEEERLNMK…ADSSDHQKNC (185 aa). A disordered region spans residues 433 to 454; sequence LNMKSPPFPSTPDSQRRGTKRR. The Nuclear localization signal motif lies at 449-458; the sequence is RGTKRRIADS. The LTD domain occupies 462-581; it reads TRFRNEASAT…VARREMTQSS (120 aa). Cys611 carries S-farnesyl cysteine lipidation. Residues 612–614 constitute a propeptide, removed in mature form; it reads VIM.

The protein belongs to the intermediate filament family.

Its subcellular location is the nucleus inner membrane. Functionally, intermediate filament (IF) protein, component of the nuclear lamina, a fibrous layer on the nucleoplasmic side of the inner nuclear membrane, which is thought to provide a framework for the nuclear envelope. The protein is Lamin-2 of Hypsibius exemplaris (Freshwater tardigrade).